We begin with the raw amino-acid sequence, 249 residues long: tRNA (guanine-N(1)-)-methyltransferase (249 aa).

Residues G113 and 133-138 (IGDYVL) each bind S-adenosyl-L-methionine.

This sequence belongs to the RNA methyltransferase TrmD family. In terms of assembly, homodimer.

Its subcellular location is the cytoplasm. It carries out the reaction guanosine(37) in tRNA + S-adenosyl-L-methionine = N(1)-methylguanosine(37) in tRNA + S-adenosyl-L-homocysteine + H(+). In terms of biological role, specifically methylates guanosine-37 in various tRNAs. The polypeptide is tRNA (guanine-N(1)-)-methyltransferase (Aeromonas salmonicida (strain A449)).